A 380-amino-acid chain; its full sequence is Cytochrome b (380 aa).

4 consecutive transmembrane segments (helical) span residues 34–54 (FGSLLGLCLITQILTGLFLAM), 78–99 (WLLRNVHANGASLFFICMYCHI), 114–134 (WNVGVILFLVTVLTAFVGYVL), and 179–199 (FFAFHFLFPFIIAALAIIDLV). Heme b contacts are provided by His-84 and His-98. Residue His-183 coordinates heme b. Position 202 (His-202) interacts with a ubiquinone. Helical transmembrane passes span 227–247 (TKDTVGFIALIAALFVLALLF), 289–309 (LGGVIALVAAILVLFLMPLLN), 321–341 (LSQATFWILVATFFVLTWIGS), and 348–369 (FVLIGQIASLLYFSLFIFGFPL).

The protein belongs to the cytochrome b family. The main subunits of complex b-c1 are: cytochrome b, cytochrome c1 and the Rieske protein. Heme b serves as cofactor.

It localises to the mitochondrion inner membrane. In terms of biological role, component of the ubiquinol-cytochrome c reductase complex (complex III or cytochrome b-c1 complex) that is part of the mitochondrial respiratory chain. The b-c1 complex mediates electron transfer from ubiquinol to cytochrome c. Contributes to the generation of a proton gradient across the mitochondrial membrane that is then used for ATP synthesis. This Paracentrotus lividus (Common sea urchin) protein is Cytochrome b (MT-CYB).